Here is a 637-residue protein sequence, read N- to C-terminus: Transcription termination factor FttA (637 aa).

A KHa region spans residues 4 to 71 (EDVLLDLKHK…IAMRPDPRVL (68 aa)). The interval 72 to 139 (ATPEDSISII…WIPKVVRTPP (68 aa)) is KHb. The tract at residues 180–383 (WVRVTALGGC…VISEATYGNA (204 aa)) is metallo-beta-lactamase N-terminus. The Zn(2+) site is built by His-242, His-244, Asp-246, His-247, His-329, and Asp-352. Residues 384–578 (NAFQPALKDA…MEVQVVDGFS (195 aa)) form a beta-Casp region. The tract at residues 579–637 (GHSDRRQLMEYVKRMQPRPERVFTEHGDEKACVDLASSVYKKLKIETRALTNLETVRLL) is metallo-beta-lactamase C-terminus. His-604 contributes to the Zn(2+) binding site.

This sequence belongs to the metallo-beta-lactamase superfamily. RNA-metabolizing metallo-beta-lactamase-like family. FttA subfamily. Homodimer. Interacts with RNA polymerase (RNAP), interacts with the Spt4-Spt5 complex. Zn(2+) serves as cofactor.

Functionally, terminates transcription on the whole genome. Termination is linked to FttA-mediated RNA cleavage and does not require NTP hydrolysis. Cleaves endonucleolytically at the RNA exit channel of RNA polymerase (RNAP); the 5'-3' exonuclease activity of this protein degrades the nascent RNA released from RNAP. This chain is Transcription termination factor FttA, found in Methanosarcina mazei (strain ATCC BAA-159 / DSM 3647 / Goe1 / Go1 / JCM 11833 / OCM 88) (Methanosarcina frisia).